A 428-amino-acid polypeptide reads, in one-letter code: Histidine--tRNA ligase (428 aa).

Belongs to the class-II aminoacyl-tRNA synthetase family. Homodimer.

Its subcellular location is the cytoplasm. It catalyses the reaction tRNA(His) + L-histidine + ATP = L-histidyl-tRNA(His) + AMP + diphosphate + H(+). The sequence is that of Histidine--tRNA ligase from Thermosynechococcus vestitus (strain NIES-2133 / IAM M-273 / BP-1).